The chain runs to 350 residues: Small ribosomal subunit biogenesis GTPase RsgA (350 aa).

Residues 1-17 (MSKNKLSKGQQRRVQAN) show a composition bias toward polar residues. Residues 1–35 (MSKNKLSKGQQRRVQANHQRRLRTDRKPELDDSQL) form a disordered region. The CP-type G domain occupies 103 to 273 (TSVLTRPDLY…VIDSPGVREF (171 aa)). Residues 159–162 (NKID) and 213–221 (GQSGVGKSS) each bind GTP. The Zn(2+) site is built by Cys-297, Cys-302, His-304, and Cys-310.

It belongs to the TRAFAC class YlqF/YawG GTPase family. RsgA subfamily. As to quaternary structure, monomer. Associates with 30S ribosomal subunit, binds 16S rRNA. Zn(2+) is required as a cofactor.

The protein localises to the cytoplasm. One of several proteins that assist in the late maturation steps of the functional core of the 30S ribosomal subunit. Helps release RbfA from mature subunits. May play a role in the assembly of ribosomal proteins into the subunit. Circularly permuted GTPase that catalyzes slow GTP hydrolysis, GTPase activity is stimulated by the 30S ribosomal subunit. The sequence is that of Small ribosomal subunit biogenesis GTPase RsgA from Yersinia enterocolitica serotype O:8 / biotype 1B (strain NCTC 13174 / 8081).